A 238-amino-acid polypeptide reads, in one-letter code: Purine nucleoside phosphorylase DeoD-type (238 aa).

Histidine 4 serves as a coordination point for a purine D-ribonucleoside. Phosphate is bound by residues glycine 20, arginine 24, arginine 43, and 87–90 (RVGS). A purine D-ribonucleoside contacts are provided by residues 179-181 (EME) and 203-204 (SD). Aspartate 204 (proton donor) is an active-site residue.

Belongs to the PNP/UDP phosphorylase family. As to quaternary structure, homohexamer; trimer of homodimers.

It carries out the reaction a purine D-ribonucleoside + phosphate = a purine nucleobase + alpha-D-ribose 1-phosphate. It catalyses the reaction a purine 2'-deoxy-D-ribonucleoside + phosphate = a purine nucleobase + 2-deoxy-alpha-D-ribose 1-phosphate. In terms of biological role, catalyzes the reversible phosphorolytic breakdown of the N-glycosidic bond in the beta-(deoxy)ribonucleoside molecules, with the formation of the corresponding free purine bases and pentose-1-phosphate. The polypeptide is Purine nucleoside phosphorylase DeoD-type (Histophilus somni (strain 2336) (Haemophilus somnus)).